We begin with the raw amino-acid sequence, 500 residues long: Zinc finger and BTB domain-containing protein 34 (500 aa).

The BTB domain maps to 32–96; sequence CDIIVHIQGQ…CYTGRMSLQL (65 aa). Ser-164 bears the Phosphoserine mark. The disordered stretch occupies residues 164 to 209; sequence SPPYCSQGRQPTASSDLRMETTPSKALRSRLQEEGHSDRGSSGSVS. A compositionally biased stretch (basic and acidic residues) spans 193–202; it reads RLQEEGHSDR. Residues Lys-235 and Lys-237 each participate in a glycyl lysine isopeptide (Lys-Gly) (interchain with G-Cter in SUMO2) cross-link. Residues 236–245 show a composition bias toward basic and acidic residues; sequence VKMEKSDRPS. Disordered regions lie at residues 236–256 and 341–360; these read VKME…GDDG and SDSE…RERS. 2 C2H2-type zinc fingers span residues 372–394 and 400–422; these read LICI…MRLH and FVCK…IRGH. Residue Lys-426 forms a Glycyl lysine isopeptide (Lys-Gly) (interchain with G-Cter in SUMO2) linkage. The C2H2-type 3 zinc-finger motif lies at 428-451; sequence FRCEICGKCFPFQGTLNQHLRKNH. Ser-463 is modified (phosphoserine). Lys-474 participates in a covalent cross-link: Glycyl lysine isopeptide (Lys-Gly) (interchain with G-Cter in SUMO2). The interval 478–500 is disordered; sequence DASASEMGLDSRMEIHTVSDAPD.

Expressed in several tissues, including heart, brain, thymus, skeletal muscle, small intestine, testis, kidney, placenta, peripheral blood cells and adult and fetal liver.

It is found in the nucleus. Functionally, may be a transcriptional repressor. In Homo sapiens (Human), this protein is Zinc finger and BTB domain-containing protein 34 (ZBTB34).